The primary structure comprises 615 residues: MTCGFQKLFSVEEDFEDEDFLSALENAENHVVSALPRDAGCLRPVSSRPQETVQTQSSRPVPSYPTSNQSVPRLCLPPSSMRENAKAPLSTGVMSLRPASISSSSLSSQQRMTGAKVFQESSGPQPSAAHSGYIFESHQQGIGDFEAPDQDDLDKALASMEFEGAGLELEADSGATQILPAKHCEDPVLAKKARVADLSGSLRKEPMVHCRNPWPSLRPTSATGSLPVPATSCVSTSQQRGSPAPAPQYLPVAGRTIRSSPQNYGPGQPLQSPRAWSSGKPRFSGPQRPHGSSAAFCQGPLSSRAPVSSVESPVSTPRNTSTPVTQPALQTPVVTNHLVQLVTATNRTPQQPSRPSIRAKTRRFPGPAGLLPHQHSGENLEEIMVSTPQTPTHGALAKFQTEIATSSQGSVEEDFGQGPWLTMKSALGLDEGDPTCFLYTYSIVMVLRKAALKQLPRNKVPNMAVMIKSLTRSTMDASVVFKDPTGEMLGTVHRVLLETHQSELRPGSVLLLKQIGVFSPSLRNHYLNVTPNNLVHIYSLDSGDGDFLEPPQPLPKDLGNSHGSLQPDVAAEPTRGLRTAQNPAVAFPEEELSEADDLDGLLSELPEDFFCEPSS.

Disordered regions lie at residues 42-75 (LRPVSSRPQETVQTQSSRPVPSYPTSNQSVPRLC), 213-326 (PWPS…PVTQ), and 546-590 (DFLE…FPEE). Ser47 bears the Phosphoserine mark. Composition is skewed to polar residues over residues 47-71 (SRPQETVQTQSSRPVPSYPTSNQSV), 232-241 (SCVSTSQQRG), and 257-275 (IRSSPQNYGPGQPLQSPRA). The segment covering 302–317 (SSRAPVSSVESPVSTP) has biased composition (low complexity).

In terms of assembly, interacts with MCM8; this interaction is necessary for MCM8-MCM9 helicase complex recruitment to DNA damage sites. Interacts with RPA1; this interaction associates HROB with the RPA complex.

It is found in the nucleus. It localises to the chromosome. Functionally, DNA-binding protein involved in homologous recombination that acts by recruiting the MCM8-MCM9 helicase complex to sites of DNA damage to promote DNA repair synthesis. This chain is Homologous recombination OB-fold protein, found in Mus musculus (Mouse).